Reading from the N-terminus, the 1345-residue chain is DNA-directed RNA polymerase subunit beta (1345 aa).

This sequence belongs to the RNA polymerase beta chain family. As to quaternary structure, the RNAP catalytic core consists of 2 alpha, 1 beta, 1 beta' and 1 omega subunit. When a sigma factor is associated with the core the holoenzyme is formed, which can initiate transcription.

The catalysed reaction is RNA(n) + a ribonucleoside 5'-triphosphate = RNA(n+1) + diphosphate. Its function is as follows. DNA-dependent RNA polymerase catalyzes the transcription of DNA into RNA using the four ribonucleoside triphosphates as substrates. The sequence is that of DNA-directed RNA polymerase subunit beta from Shewanella sp. (strain ANA-3).